The primary structure comprises 309 residues: Ribosomal RNA small subunit methyltransferase H (309 aa).

S-adenosyl-L-methionine-binding positions include 36–38 (GGH), Asp56, Phe82, Asp103, and Gln110.

It belongs to the methyltransferase superfamily. RsmH family.

The protein localises to the cytoplasm. It catalyses the reaction cytidine(1402) in 16S rRNA + S-adenosyl-L-methionine = N(4)-methylcytidine(1402) in 16S rRNA + S-adenosyl-L-homocysteine + H(+). Its function is as follows. Specifically methylates the N4 position of cytidine in position 1402 (C1402) of 16S rRNA. The chain is Ribosomal RNA small subunit methyltransferase H from Hahella chejuensis (strain KCTC 2396).